A 241-amino-acid polypeptide reads, in one-letter code: MTLPIHFPRCVLYGMASAVWSILFLHILVGDTMSAADALSWSGGLIHSPAHRVNVMRSHHHEMGKELEQQHGGEEQQMQRDTKPAAFSNPPHLATGRGPSFVHADGQLDVSCFPHDKNIGSRTTEVAVVQVSSVQDCMKQCQSRPTCSHFTYNKNSKKCHLKDGAPVFYTYTGDMTGPRSCEHTCTDNCWMHSGNPLGTFQYSGHAPAFCWAACKGTAGCVMYTFQGGVCKLYSKNSVERA.

A signal peptide spans 1-34; the sequence is MTLPIHFPRCVLYGMASAVWSILFLHILVGDTMS. The propeptide occupies 35–103; it reads AADALSWSGG…ATGRGPSFVH (69 aa). Basic and acidic residues predominate over residues 64 to 83; it reads GKELEQQHGGEEQQMQRDTK. A disordered region spans residues 64–90; it reads GKELEQQHGGEEQQMQRDTKPAAFSNP. 2 PAN domains span residues 112 to 181 and 185 to 241; these read CFPH…PRSC and CTDN…VERA. 6 cysteine pairs are disulfide-bonded: Cys-112-Cys-181, Cys-137-Cys-159, Cys-141-Cys-147, Cys-185-Cys-189, Cys-210-Cys-230, and Cys-214-Cys-220. Position 121 (Ser-121) interacts with a carbohydrate. Lys-162, Tyr-169, and Asp-174 together coordinate a carbohydrate.

It belongs to the microneme antigen family. As to quaternary structure, homodimer or heterodimer of major microneme antigen and microneme antigen. Contains six disulfide bonds.

The protein localises to the cytoplasmic vesicle. It is found in the secretory vesicle. Its subcellular location is the microneme. Galactose-binding lectin. Plays a role in adhesion to the host cell. Has a potential role in invasion of host cells. This Sarcocystis muris protein is Major microneme antigen.